The sequence spans 513 residues: ATP synthase subunit alpha (513 aa).

169–176 serves as a coordination point for ATP; that stretch reads GDRQTGKT.

Belongs to the ATPase alpha/beta chains family. In terms of assembly, F-type ATPases have 2 components, CF(1) - the catalytic core - and CF(0) - the membrane proton channel. CF(1) has five subunits: alpha(3), beta(3), gamma(1), delta(1), epsilon(1). CF(0) has three main subunits: a(1), b(2) and c(9-12). The alpha and beta chains form an alternating ring which encloses part of the gamma chain. CF(1) is attached to CF(0) by a central stalk formed by the gamma and epsilon chains, while a peripheral stalk is formed by the delta and b chains.

The protein resides in the cell inner membrane. It catalyses the reaction ATP + H2O + 4 H(+)(in) = ADP + phosphate + 5 H(+)(out). Its function is as follows. Produces ATP from ADP in the presence of a proton gradient across the membrane. The alpha chain is a regulatory subunit. This Glaesserella parasuis serovar 5 (strain SH0165) (Haemophilus parasuis) protein is ATP synthase subunit alpha.